The sequence spans 1005 residues: Vacuolar membrane protease (1005 aa).

At 1-14 (MAKETTARSILGYQ) the chain is on the cytoplasmic side. A helical membrane pass occupies residues 15 to 35 (TLPTTALIALIYVVAFFSVLV). Residues 36 to 353 (SDQLPSIPHP…PEDSAKQKSK (318 aa)) lie on the Vacuolar side of the membrane. Asn107 carries an N-linked (GlcNAc...) asparagine glycan. The Zn(2+) site is built by His152 and Asp164. The Proton acceptor role is filled by Glu196. Zn(2+) is bound at residue Glu197. An N-linked (GlcNAc...) asparagine glycan is attached at Asn213. 2 residues coordinate Zn(2+): Glu222 and His311. The helical transmembrane segment at 354–374 (PGVYFDRPVVLALLWAIGAVL) threads the bilayer. The Cytoplasmic portion of the chain corresponds to 375 to 448 (KHNAGSPPPP…LITVWKQASF (74 aa)). Positions 379–420 (GSPPPPPKPTVPHSANNASAGTGRPGASTRQPTRSFGSNEDA) are disordered. Residues 406 to 419 (STRQPTRSFGSNED) show a composition bias toward polar residues. Residues 449-469 (WIALIVTVGLQALLAWGYVAI) traverse the membrane as a helical segment. Over 470–479 (NPFTIYSRPY) the chain is Vacuolar. A helical transmembrane segment spans residues 480–500 (FVLLSFFALSFFSMTLVLQAA). Topologically, residues 501 to 519 (FPSSPVKHAIEVREQEKTT) are cytoplasmic. The chain crosses the membrane as a helical span at residues 520 to 540 (ILLHLHLLSWIALLLSTILIG). The Vacuolar portion of the chain corresponds to 541 to 543 (KSQ). Residues 544–564 (VGSFYVVTVWYLGIWAATVIG) traverse the membrane as a helical segment. The Cytoplasmic portion of the chain corresponds to 565 to 644 (TLQPILVSKR…RKTNSKSKED (80 aa)). Positions 577–640 (DKGKRRARRS…ASNRRKTNSK (64 aa)) are disordered. Over residues 588–606 (SASTSSSSSSSSSSSSGSD) the composition is skewed to low complexity. Residues 645–665 (GAIGWWIAQVLLTVPPVVMLV) form a helical membrane-spanning segment. Over 666-686 (GQITSIVLEAMNQTLTDGNSA) the chain is Vacuolar. Asn677 carries an N-linked (GlcNAc...) asparagine glycan. A helical transmembrane segment spans residues 687–707 (WSIYLLTALLATMLVLPVAPF). Over 708 to 713 (SPKLHR) the chain is Cytoplasmic. The chain crosses the membrane as a helical span at residues 714 to 734 (GLIFLSAAVFVGFTIYLWVVF). At 735 to 1005 (PFTRQDPFKV…VEASAPFTVV (271 aa)) the chain is on the vacuolar side. Asn761 and Asn961 each carry an N-linked (GlcNAc...) asparagine glycan.

This sequence belongs to the peptidase M28 family. The cofactor is Zn(2+).

The protein resides in the vacuole membrane. Functionally, may be involved in vacuolar sorting and osmoregulation. The chain is Vacuolar membrane protease from Coprinopsis cinerea (strain Okayama-7 / 130 / ATCC MYA-4618 / FGSC 9003) (Inky cap fungus).